The sequence spans 512 residues: MLFEGLELVSALATLAACLVSVTLLLAVSQQLWQLRWAATRDKSCKLPIPKGSMGFPLIGETGHWLLQGSGFQSSRREKYGNVFKTHLLGRPLIRVTGAENVRKILLGEHQLVSTEWPRSARVLLGPNTVANSIGDIHRNKRKVFSKIFSHEALESYLPKIQLVIQDTLRAWSSQPEAINVYQEAQRLTFRMAVRVLLGFSIPEEDLGNLFEVYQQFVENVFSLPVDLPFSGYRRGIQARQILQKGLEKAIREKLQCTQGKDYSDALDILIESSKEHGKEMTMQELKDGTLELIFAAYATTASASTSLIMQLLKHPAVLEKLREELRAQGLLHGGGCPCEGTLRLDMLSGLRYLDCVIKEVMRLFTPVSGGYRTVLQTFELDGFQIPKGWSVMYSIRDTHDTAPVFKDVNVFDPDRFSQARSEDKDGRFHYLPFGGGVRTCLGKHLAKLFLKVLAVELASTSRFELATRTFPRITLVPVLHPVDGLSVKFFGLDSNQNEILPETEAMLSATV.

C441 provides a ligand contact to heme.

It belongs to the cytochrome P450 family. It depends on heme as a cofactor.

The protein localises to the endoplasmic reticulum membrane. It is found in the microsome membrane. The enzyme catalyses all-trans-retinoate + reduced [NADPH--hemoprotein reductase] + O2 = all-trans-4-hydroxyretinoate + oxidized [NADPH--hemoprotein reductase] + H2O + H(+). It catalyses the reaction all-trans-retinoate + reduced [NADPH--hemoprotein reductase] + O2 = all-trans-18-hydroxyretinoate + oxidized [NADPH--hemoprotein reductase] + H2O + H(+). Its function is as follows. A cytochrome P450 monooxygenase involved in the metabolism of retinoates (RAs), the active metabolites of vitamin A, and critical signaling molecules in animals. RAs exist as at least four different isomers: all-trans-RA (atRA), 9-cis-RA, 13-cis-RA, and 9,13-dicis-RA, where atRA is considered to be the biologically active isomer, although 9-cis-RA and 13-cis-RA also have activity. Catalyzes the hydroxylation of atRA primarily at C-4 and C-18, thereby contributing to the regulation of atRA homeostasis and signaling. Hydroxylation of atRA limits its biological activity and initiates a degradative process leading to its eventual elimination. Involved in the convertion of atRA to all-trans-4-oxo-RA. Can oxidize all-trans-13,14-dihydroretinoate (DRA) to metabolites which could include all-trans-4-oxo-DRA, all-trans-4-hydroxy-DRA, all-trans-5,8-epoxy-DRA, and all-trans-18-hydroxy-DRA. Shows preference for the following substrates: atRA &gt; 9-cis-RA &gt; 13-cis-RA. Plays a central role in germ cell development: acts by degrading RAs in the developing testis, preventing STRA8 expression, thereby leading to delay of meiosis. Required for the maintenance of the undifferentiated state of male germ cells during embryonic development in Sertoli cells, inducing arrest in G0 phase of the cell cycle and preventing meiotic entry. Plays a role in skeletal development, both at the level of patterning and in the ossification of bone and the establishment of some synovial joints. Essential for postnatal survival. Functionally, also has a significant activity in oxidation of tazarotenic acid and may therefore metabolize that xenobiotic in vivo. This Rattus norvegicus (Rat) protein is Cytochrome P450 26B1 (Cyp26b1).